A 592-amino-acid chain; its full sequence is 1,4-alpha-glucan branching enzyme GlgB 2 (592 aa).

D274 serves as the catalytic Nucleophile. E327 (proton donor) is an active-site residue.

It belongs to the glycosyl hydrolase 13 family. GlgB subfamily. In terms of assembly, monomer.

The catalysed reaction is Transfers a segment of a (1-&gt;4)-alpha-D-glucan chain to a primary hydroxy group in a similar glucan chain.. The protein operates within glycan biosynthesis; glycogen biosynthesis. Catalyzes the formation of the alpha-1,6-glucosidic linkages in glycogen by scission of a 1,4-alpha-linked oligosaccharide from growing alpha-1,4-glucan chains and the subsequent attachment of the oligosaccharide to the alpha-1,6 position. The chain is 1,4-alpha-glucan branching enzyme GlgB 2 from Streptomyces avermitilis (strain ATCC 31267 / DSM 46492 / JCM 5070 / NBRC 14893 / NCIMB 12804 / NRRL 8165 / MA-4680).